The chain runs to 601 residues: Uptake hydrogenase large subunit (601 aa).

Residues Cys74, Cys77, Cys580, and Cys583 each contribute to the Ni(2+) site.

The protein belongs to the [NiFe]/[NiFeSe] hydrogenase large subunit family. As to quaternary structure, heterodimer of a large and a small subunit. The cofactor is Ni(2+).

The protein resides in the cell membrane. It catalyses the reaction H2 + A = AH2. In terms of biological role, this enzyme recycles the H(2) produced by nitrogenase to increase the production of ATP and to protect nitrogenase against inhibition or damage by O(2) under carbon- or phosphate-limited conditions. This is Uptake hydrogenase large subunit (hupL) from Azotobacter chroococcum mcd 1.